The sequence spans 227 residues: A-type potassium channel modulatory protein KCNIP1 (227 aa).

Positions 38–94 (LEMTMVCHRPEGLEQLEAQTNFTKRELQVLYRGFKNECPSGVVNEDTFKQIYAQFFP) constitute an EF-hand 1; degenerate domain. EF-hand domains are found at residues 97–132 (DAST…LLRG), 133–168 (TVHE…IYDM), and 181–216 (TPRQ…DDNI). Ca(2+) is bound by residues D146, N148, D150, Y152, E157, D194, N196, D198, and E205. The segment at 214-227 (DNIMRSLQLFQNVM) is interaction with KCND2.

The protein belongs to the recoverin family. Component of heteromultimeric potassium channels. Identified in potassium channel complexes containing KCND1, KCND2, KCND3, KCNIP1, KCNIP2, KCNIP3, KCNIP4, DPP6 and DPP10. Part of a heterooctamer composed of the tetrameric channel and four KCNIP1 chains. Probably part of a complex consisting of KCNIP1, KCNIP2 isoform 3 and KCND2. Self-associates to form homodimers and homotetramers. Interacts with KCNIP2 isoform 3 in a calcium-dependent manner. Interacts with Naja atra venom CTX3. Interacts with KCND2; this interaction mediates the capture of both the N- and C-terminus of KCND2, thus preventing KCND2 N-type inactivation and modulates the channel gating kinetics. Interacts with KCND3; each KCNIP1 monomer interacts with two adjacent KCND3 subunits, through both the N-terminal inactivation ball of a KCND3 subunit and a C-terminal helix from the adjacent KCND3 subunit, clamping them together; this interaction stabilizes the tetrameric form and modulates the channel gating kinetics namely channel activation and inactivation kinetics and rate of recovery from inactivation. As to expression, isoform 1 and isoform 2 are expressed in brain and kidney. Isoform 1 is also expressed in liver, pancreas, skeletal muscle, small intestine and testis. Isoform 2 is also expressed in lung, pancreas, leukocytes, prostate and thymus.

The protein localises to the cell membrane. It localises to the cytoplasm. It is found in the cell projection. Its subcellular location is the dendrite. Regulatory subunit of Kv4/D (Shal)-type voltage-gated rapidly inactivating A-type potassium channels. Regulates channel density, inactivation kinetics and rate of recovery from inactivation in a calcium-dependent and isoform-specific manner. In vitro, modulates KCND1/Kv4.1 and KCND2/Kv4.2 currents. Increases the presence of KCND2 at the cell surface. This is A-type potassium channel modulatory protein KCNIP1 from Homo sapiens (Human).